A 236-amino-acid chain; its full sequence is Flagellar L-ring protein (236 aa).

A signal peptide spans 1 to 16 (MRMQLTAVLAASLLAG). A lipid anchor (N-palmitoyl cysteine) is attached at cysteine 17. Residue cysteine 17 is the site of S-diacylglycerol cysteine attachment.

Belongs to the FlgH family. In terms of assembly, the basal body constitutes a major portion of the flagellar organelle and consists of four rings (L,P,S, and M) mounted on a central rod.

The protein localises to the cell outer membrane. Its subcellular location is the bacterial flagellum basal body. Its function is as follows. Assembles around the rod to form the L-ring and probably protects the motor/basal body from shearing forces during rotation. This is Flagellar L-ring protein from Sinorhizobium fredii (strain NBRC 101917 / NGR234).